A 131-amino-acid chain; its full sequence is Small ribosomal subunit protein eS8 (131 aa).

The segment at 11 to 36 (DLKKPSGGKKGRVRKTKKKALCGGPP) is disordered. Residues 16–30 (SGGKKGRVRKTKKKA) show a composition bias toward basic residues.

The protein belongs to the eukaryotic ribosomal protein eS8 family. Part of the 30S ribosomal subunit.

The chain is Small ribosomal subunit protein eS8 from Pyrobaculum islandicum (strain DSM 4184 / JCM 9189 / GEO3).